The chain runs to 127 residues: KP4 killer toxin (127 aa).

The first 22 residues, 1–22 (MQIINVVYSFLFAAAMLPVVHS), serve as a signal peptide directing secretion. 5 cysteine pairs are disulfide-bonded: cysteine 27–cysteine 100, cysteine 33–cysteine 103, cysteine 49–cysteine 89, cysteine 57–cysteine 82, and cysteine 66–cysteine 127.

In terms of assembly, monomer.

The protein localises to the secreted. In terms of biological role, this protein is lethal to sensitive cells of the same or related species. It specifically inhibits voltage-gated calcium channels. It inhibits cell growth and division by blocking calcium import. In Mycosarcoma maydis (Corn smut fungus), this protein is KP4 killer toxin (M2A).